Reading from the N-terminus, the 652-residue chain is Acetyl-coenzyme A synthetase (652 aa).

Residues 191-194, threonine 311, and asparagine 335 each bind CoA; that span reads RAGR. ATP is bound by residues 387-389, 411-416, aspartate 500, and arginine 515; these read GEP and DTWWQT. Residue serine 523 coordinates CoA. Arginine 526 lines the ATP pocket. Residues valine 537, histidine 539, and isoleucine 542 each coordinate Mg(2+). Arginine 584 contacts CoA. Residue lysine 609 is modified to N6-acetyllysine.

This sequence belongs to the ATP-dependent AMP-binding enzyme family. Mg(2+) serves as cofactor. In terms of processing, acetylated. Deacetylation by the SIR2-homolog deacetylase activates the enzyme.

It catalyses the reaction acetate + ATP + CoA = acetyl-CoA + AMP + diphosphate. Its function is as follows. Catalyzes the conversion of acetate into acetyl-CoA (AcCoA), an essential intermediate at the junction of anabolic and catabolic pathways. Acs undergoes a two-step reaction. In the first half reaction, Acs combines acetate with ATP to form acetyl-adenylate (AcAMP) intermediate. In the second half reaction, it can then transfer the acetyl group from AcAMP to the sulfhydryl group of CoA, forming the product AcCoA. In terms of biological role, enables the cell to use acetate during aerobic growth to generate energy via the TCA cycle, and biosynthetic compounds via the glyoxylate shunt. Acetylates CheY, the response regulator involved in flagellar movement and chemotaxis. This chain is Acetyl-coenzyme A synthetase, found in Yersinia pseudotuberculosis serotype I (strain IP32953).